A 219-amino-acid polypeptide reads, in one-letter code: Transcriptional regulator AcuR (219 aa).

Residues 1–25 are disordered; that stretch reads MPLTDTPPSVPQKPRRGRPRGAPDA. Positions 26–86 constitute an HTH tetR-type domain; the sequence is SLAHQSLIRA…ALIEAYDTYF (61 aa). Residues 49 to 68 constitute a DNA-binding region (H-T-H motif); it reads GVDEILKAARVPKGSFYHYF.

Its function is as follows. A transcriptional repressor for its operon. Probably binds to 2 operator sequences in the promoter. The protein is Transcriptional regulator AcuR (acuR) of Cereibacter sphaeroides (strain ATCC 17023 / DSM 158 / JCM 6121 / CCUG 31486 / LMG 2827 / NBRC 12203 / NCIMB 8253 / ATH 2.4.1.) (Rhodobacter sphaeroides).